The sequence spans 346 residues: Methionine import ATP-binding protein MetN 1 (346 aa).

In terms of domain architecture, ABC transporter spans 2–241 (IEFKQVTKTF…PQHPTTEKFV (240 aa)). 38–45 (GFSGAGKS) provides a ligand contact to ATP.

This sequence belongs to the ABC transporter superfamily. Methionine importer (TC 3.A.1.24) family. As to quaternary structure, the complex is composed of two ATP-binding proteins (MetN), two transmembrane proteins (MetI) and a solute-binding protein (MetQ).

The protein localises to the cell membrane. It catalyses the reaction L-methionine(out) + ATP + H2O = L-methionine(in) + ADP + phosphate + H(+). The enzyme catalyses D-methionine(out) + ATP + H2O = D-methionine(in) + ADP + phosphate + H(+). Functionally, part of the ABC transporter complex MetNIQ involved in methionine import. Responsible for energy coupling to the transport system. The polypeptide is Methionine import ATP-binding protein MetN 1 (Shouchella clausii (strain KSM-K16) (Alkalihalobacillus clausii)).